The following is a 398-amino-acid chain: Arylacetamide deacetylase (398 aa).

Residues 1–5 (MGRTI) lie on the Cytoplasmic side of the membrane. Residues 6 to 26 (FLLISVVLVAYYIYIPLPDDI) form a helical; Signal-anchor for type II membrane protein membrane-spanning segment. Residues 27–398 (EEPWKIILGN…QYLNWLHKNL (372 aa)) are Lumenal-facing. Asparagine 77 carries an N-linked (GlcNAc...) asparagine glycan. Residues 110–112 (HGG) carry the Involved in the stabilization of the negatively charged intermediate by the formation of the oxyanion hole motif. Cysteines 115 and 339 form a disulfide. Serine 188 is a catalytic residue. N-linked (GlcNAc...) asparagine glycosylation is found at asparagine 192, asparagine 281, and asparagine 324. Active-site residues include aspartate 342 and histidine 372.

It belongs to the 'GDXG' lipolytic enzyme family. As to expression, highest levels in liver with lower levels in jejunum, kidney and testis.

It is found in the endoplasmic reticulum membrane. It localises to the microsome membrane. It carries out the reaction a triacylglycerol + H2O = a diacylglycerol + a fatty acid + H(+). Its function is as follows. Displays cellular triglyceride lipase activity in liver, increases the levels of intracellular fatty acids derived from the hydrolysis of newly formed triglyceride stores and plays a role in very low-density lipoprotein assembly. Displays serine esterase activity in liver. Deacetylates a variety of arylacetamide substrates, including xenobiotic compounds and procarcinogens, converting them to the primary arylamide compounds and increasing their toxicity. The chain is Arylacetamide deacetylase (Aadac) from Rattus norvegicus (Rat).